A 470-amino-acid chain; its full sequence is L-seryl-tRNA(Sec) selenium transferase (470 aa).

Lys-292 carries the post-translational modification N6-(pyridoxal phosphate)lysine.

This sequence belongs to the SelA family. It depends on pyridoxal 5'-phosphate as a cofactor.

The protein localises to the cytoplasm. The catalysed reaction is L-seryl-tRNA(Sec) + selenophosphate + H(+) = L-selenocysteinyl-tRNA(Sec) + phosphate. It participates in aminoacyl-tRNA biosynthesis; selenocysteinyl-tRNA(Sec) biosynthesis; selenocysteinyl-tRNA(Sec) from L-seryl-tRNA(Sec) (bacterial route): step 1/1. Its function is as follows. Converts seryl-tRNA(Sec) to selenocysteinyl-tRNA(Sec) required for selenoprotein biosynthesis. The protein is L-seryl-tRNA(Sec) selenium transferase of Moorella thermoacetica (strain ATCC 39073 / JCM 9320).